Here is a 568-residue protein sequence, read N- to C-terminus: Potassium-transporting ATPase potassium-binding subunit (568 aa).

10 helical membrane-spanning segments follow: residues 3–23 (TEIL…YPLG), 64–84 (FLKA…VLLV), 133–153 (FVIM…MAGV), 179–199 (ILLP…TPMG), 255–275 (MVEC…LGFY), 281–301 (LGYS…FINV), 375–395 (FGGV…AVFI), 418–438 (IATF…AISS), 497–517 (IVLI…AGLL), and 535–555 (VTFA…SFFP).

Belongs to the KdpA family. The system is composed of three essential subunits: KdpA, KdpB and KdpC.

The protein resides in the cell inner membrane. Part of the high-affinity ATP-driven potassium transport (or Kdp) system, which catalyzes the hydrolysis of ATP coupled with the electrogenic transport of potassium into the cytoplasm. This subunit binds the periplasmic potassium ions and delivers the ions to the membrane domain of KdpB through an intramembrane tunnel. This is Potassium-transporting ATPase potassium-binding subunit from Bacteroides fragilis (strain ATCC 25285 / DSM 2151 / CCUG 4856 / JCM 11019 / LMG 10263 / NCTC 9343 / Onslow / VPI 2553 / EN-2).